Consider the following 772-residue polypeptide: C-Maf-inducing protein (772 aa).

Positions 52–160 (KLLQEGDIQV…WFHSLQWKKK (109 aa)) constitute a PH domain. LRR repeat units lie at residues 662–683 (NLEN…QLIK), 686–706 (SLKQ…RVLS), 711–731 (TLQV…LALS), and 735–755 (SLCN…EDLK).

The protein localises to the nucleus. The protein resides in the cytoplasm. Functionally, plays a role in T-cell signaling pathway. The polypeptide is C-Maf-inducing protein (cmip) (Xenopus laevis (African clawed frog)).